The following is a 311-amino-acid chain: Exosome complex component Rrp4 (311 aa).

The S1 motif domain occupies 63–131; sequence GDVVIGEITD…EVKKVKLGLK (69 aa). Residues 139-197 enclose the KH domain; that stretch reads RDGILVYITPTKVPRLIGKRGSMINMVKEKTHCDIVVGQNGVVWIKGEPDMERIAEKVV. The tract at residues 222–311 is disordered; that stretch reads GVEPEIQVEE…EVKDENNSER (90 aa). Acidic residues predominate over residues 241 to 300; it reads PESEDFEEASDYSEDVEVSPESEDIEEVSDESEDLEVESEDVEEGTDTPAAEEDDGEAGD. Residues 301–311 are compositionally biased toward basic and acidic residues; sequence AEVKDENNSER.

Belongs to the RRP4 family. As to quaternary structure, component of the archaeal exosome complex. Forms a trimer of Rrp4 and/or Csl4 subunits. The trimer associates with a hexameric ring-like arrangement composed of 3 Rrp41-Rrp42 heterodimers.

The protein resides in the cytoplasm. Functionally, non-catalytic component of the exosome, which is a complex involved in RNA degradation. Increases the RNA binding and the efficiency of RNA degradation. Confers strong poly(A) specificity to the exosome. In Methanothermobacter thermautotrophicus (strain ATCC 29096 / DSM 1053 / JCM 10044 / NBRC 100330 / Delta H) (Methanobacterium thermoautotrophicum), this protein is Exosome complex component Rrp4.